The primary structure comprises 29 residues: Varv peptide D (29 aa).

A cross-link (cyclopeptide (Gly-Asn)) is located at residues glycine 1 to asparagine 29. 3 cysteine pairs are disulfide-bonded: cysteine 5–cysteine 19, cysteine 9–cysteine 21, and cysteine 14–cysteine 26.

In terms of processing, this is a cyclic peptide.

Functionally, probably participates in a plant defense mechanism. The sequence is that of Varv peptide D from Viola arvensis (European field pansy).